The primary structure comprises 158 residues: Ribosomal RNA large subunit methyltransferase H (158 aa).

S-adenosyl-L-methionine-binding positions include Leu-73, Gly-107, and 126 to 131; that span reads FGEITL.

This sequence belongs to the RNA methyltransferase RlmH family. In terms of assembly, homodimer.

The protein localises to the cytoplasm. It carries out the reaction pseudouridine(1915) in 23S rRNA + S-adenosyl-L-methionine = N(3)-methylpseudouridine(1915) in 23S rRNA + S-adenosyl-L-homocysteine + H(+). Functionally, specifically methylates the pseudouridine at position 1915 (m3Psi1915) in 23S rRNA. This is Ribosomal RNA large subunit methyltransferase H from Rubrobacter xylanophilus (strain DSM 9941 / JCM 11954 / NBRC 16129 / PRD-1).